A 691-amino-acid chain; its full sequence is Elongation factor G (691 aa).

The tr-type G domain occupies 12 to 286 (NKLRNIGIMA…GIVRYLPSPL (275 aa)). GTP is bound by residues 21-28 (AHIDAGKT), 85-89 (DTPGH), and 139-142 (NKMD).

It belongs to the TRAFAC class translation factor GTPase superfamily. Classic translation factor GTPase family. EF-G/EF-2 subfamily.

Its subcellular location is the cytoplasm. Its function is as follows. Catalyzes the GTP-dependent ribosomal translocation step during translation elongation. During this step, the ribosome changes from the pre-translocational (PRE) to the post-translocational (POST) state as the newly formed A-site-bound peptidyl-tRNA and P-site-bound deacylated tRNA move to the P and E sites, respectively. Catalyzes the coordinated movement of the two tRNA molecules, the mRNA and conformational changes in the ribosome. This chain is Elongation factor G, found in Fervidobacterium nodosum (strain ATCC 35602 / DSM 5306 / Rt17-B1).